Consider the following 223-residue polypeptide: dITP/XTP pyrophosphatase (223 aa).

9-14 (TTNQNK) is a binding site for substrate. Catalysis depends on aspartate 71, which acts as the Proton acceptor. Aspartate 71 provides a ligand contact to Mg(2+). Residues serine 72, 152 to 155 (FGYD), lysine 175, and 180 to 181 (HR) contribute to the substrate site. The interval 203–223 (LSEEKPAKPDHSEFEGNDWSK) is disordered.

This sequence belongs to the HAM1 NTPase family. Homodimer. Mg(2+) is required as a cofactor.

It carries out the reaction XTP + H2O = XMP + diphosphate + H(+). The catalysed reaction is dITP + H2O = dIMP + diphosphate + H(+). It catalyses the reaction ITP + H2O = IMP + diphosphate + H(+). In terms of biological role, pyrophosphatase that catalyzes the hydrolysis of nucleoside triphosphates to their monophosphate derivatives, with a high preference for the non-canonical purine nucleotides XTP (xanthosine triphosphate), dITP (deoxyinosine triphosphate) and ITP. Seems to function as a house-cleaning enzyme that removes non-canonical purine nucleotides from the nucleotide pool, thus preventing their incorporation into DNA/RNA and avoiding chromosomal lesions. The polypeptide is dITP/XTP pyrophosphatase (Desulfotalea psychrophila (strain LSv54 / DSM 12343)).